The primary structure comprises 550 residues: Chaperonin GroEL (550 aa).

Residues 30–33 (TLGP), lysine 51, 87–91 (DGTTT), glycine 415, and aspartate 496 contribute to the ATP site.

This sequence belongs to the chaperonin (HSP60) family. Forms a cylinder of 14 subunits composed of two heptameric rings stacked back-to-back. Interacts with the co-chaperonin GroES.

The protein localises to the cytoplasm. The enzyme catalyses ATP + H2O + a folded polypeptide = ADP + phosphate + an unfolded polypeptide.. Functionally, together with its co-chaperonin GroES, plays an essential role in assisting protein folding. The GroEL-GroES system forms a nano-cage that allows encapsulation of the non-native substrate proteins and provides a physical environment optimized to promote and accelerate protein folding. The sequence is that of Chaperonin GroEL from Rickettsia prowazekii (strain Madrid E).